Consider the following 168-residue polypeptide: G/U mismatch-specific DNA glycosylase (168 aa).

Belongs to the uracil-DNA glycosylase (UDG) superfamily. TDG/mug family. Binds DNA as a monomer.

Its subcellular location is the cytoplasm. The enzyme catalyses Specifically hydrolyzes mismatched double-stranded DNA and polynucleotides, releasing free uracil.. Functionally, excises ethenocytosine and uracil, which can arise by alkylation or deamination of cytosine, respectively, from the corresponding mispairs with guanine in ds-DNA. It is capable of hydrolyzing the carbon-nitrogen bond between the sugar-phosphate backbone of the DNA and the mispaired base. The complementary strand guanine functions in substrate recognition. Required for DNA damage lesion repair in stationary-phase cells. This chain is G/U mismatch-specific DNA glycosylase, found in Salmonella agona (strain SL483).